Reading from the N-terminus, the 262-residue chain is Matrilysin (262 aa).

Residues 1–12 (LCVLCLLPQSPA) form the signal peptide. A propeptide spans 13–89 (LPLPREAGGH…PRCGLPDTGE (77 aa)) (activation peptide). Residues 80–87 (PRCGLPDT) carry the Cysteine switch motif. C82 provides a ligand contact to Zn(2+). Ca(2+) is bound at residue D148. The Zn(2+) site is built by H158 and D160. Residues D165, G166, G168, and T170 each contribute to the Ca(2+) site. H173 contacts Zn(2+). The Ca(2+) site is built by G180, G182, and D184. H186 is a Zn(2+) binding site. Ca(2+) is bound by residues D188 and E191. Residue H209 coordinates Zn(2+). E210 is an active-site residue. Zn(2+)-binding residues include H213 and H219.

Belongs to the peptidase M10A family. It depends on Ca(2+) as a cofactor. The cofactor is Zn(2+).

The protein resides in the secreted. It is found in the extracellular space. The protein localises to the extracellular matrix. It catalyses the reaction Cleavage of 14-Ala-|-Leu-15 and 16-Tyr-|-Leu-17 in B chain of insulin. No action on collagen types I, II, IV, V. Cleaves gelatin chain alpha2(I) &gt; alpha1(I).. Its function is as follows. Degrades casein, gelatins of types I, III, IV, and V, and fibronectin. Activates procollagenase. This Felis catus (Cat) protein is Matrilysin (MMP7).